A 605-amino-acid polypeptide reads, in one-letter code: Pyruvate decarboxylase 2 (605 aa).

Positions 68 and 155 each coordinate substrate. Residues 433–515 (DSWFNCQKLK…FLINNGGYTI (83 aa)) form a thiamine pyrophosphate binding region. 3 residues coordinate Mg(2+): D483, N510, and G512. E516 contacts substrate.

The protein belongs to the TPP enzyme family. In terms of assembly, homotetramer. It depends on a metal cation as a cofactor. Requires thiamine diphosphate as cofactor.

It catalyses the reaction a 2-oxocarboxylate + H(+) = an aldehyde + CO2. This Oryza sativa subsp. japonica (Rice) protein is Pyruvate decarboxylase 2 (PDC2).